A 275-amino-acid polypeptide reads, in one-letter code: Small ribosomal subunit protein uS3 (275 aa).

The region spanning 38–106 is the KH type-2 domain; it reads IRRMMTSGME…QVQLNILEVK (69 aa). The span at 216–228 shows a compositional bias: low complexity; the sequence is NAAARAGNRPARG. Residues 216–275 are disordered; it reads NAAARAGNRPARGGADRPARGGRGGERGGRGRKPQQAPAAEAPKAEAPAAAPAESTGTEA. Residues 229–244 are compositionally biased toward basic and acidic residues; the sequence is GADRPARGGRGGERGG. Residues 249–268 show a composition bias toward low complexity; sequence PQQAPAAEAPKAEAPAAAPA.

It belongs to the universal ribosomal protein uS3 family. In terms of assembly, part of the 30S ribosomal subunit. Forms a tight complex with proteins S10 and S14.

In terms of biological role, binds the lower part of the 30S subunit head. Binds mRNA in the 70S ribosome, positioning it for translation. The chain is Small ribosomal subunit protein uS3 from Streptomyces avermitilis (strain ATCC 31267 / DSM 46492 / JCM 5070 / NBRC 14893 / NCIMB 12804 / NRRL 8165 / MA-4680).